The primary structure comprises 649 residues: MGDKINFIFGIHNHQPLGNFGWVFEEAYEKCYWPFLETLEEYPNMKVAIHTSGPLIEWLQDNRPEYIDLLRSLVKRGQVEIVVAGFYEPVLASIPKEDRIEQIRLMKEWAKSIGFDARGVWLTERVWQPELVKTLKESGIDYVIVDDYHFMSAGLSKEELYWPYYTEDGGEVIAVFPIDEKLRYLIPFRPVDKVLEYLHSLIDGDESKVAVFHDDGEKFGIWPGTYEWVYEKGWLREFFDRISSDEKINLMLYTEYLEKYKPRGLVYLPIASYFEMSEWSLPAKQARLFVEFVNELKVKGIFEKYRVFVRGGIWKNFFYKYPESNYMHKRMLMVSKLVRNNPEARKYLLRAQCNDAYWHGLFGGVYLPHLRRAIWNNLIKANSYVSLGKVIRDIDYDGFEEVLIENDNFYAVFKPSYGGSLVEFSSKNRLVNYVDVLARRWEHYHGYVESQFDGVASIHELEKKIPDEIRKEVAYDKYRRFMLQDHVVPLGTTLEDFMFSRQQEIGEFPRVPYSYELLDGGIRLKREHLGIEVEKTVKLVNDGFEVEYIVNNKTGNPVLFAVELNVAVQSIMESPGVLRGKEIVVDDKYAVGKFALKFEDEMEVWKYPVKTLSQSESGWDLIQQGVSYIVPIRLEDKIRFKLKFEEASG.

Glutamate 124 functions as the Nucleophile in the catalytic mechanism. Aspartate 215 (proton donor) is an active-site residue.

Belongs to the glycosyl hydrolase 57 family. In terms of assembly, homodimer.

The enzyme catalyses Endohydrolysis of (1-&gt;4)-alpha-D-glucosidic linkages in polysaccharides containing three or more (1-&gt;4)-alpha-linked D-glucose units.. Functionally, displays a broad range of substrate specificity, with the capacity to hydrolyze carbohydrates as simple as maltotriose. This chain is Alpha-amylase (amyA), found in Pyrococcus furiosus (strain ATCC 43587 / DSM 3638 / JCM 8422 / Vc1).